Consider the following 1215-residue polypeptide: Cellulose synthase-like protein D4 (1215 aa).

Disordered stretches follow at residues 24–46 (GGDA…SLGS) and 206–231 (SDTD…ERDQ). Positions 207 to 222 (DTDESDSVTDDDDDEA) are enriched in acidic residues. The next 2 helical transmembrane spans lie at 321-341 (AILS…GFFL) and 352-372 (AVWL…SWLL). Active-site residues include Asp452 and Asp905. 6 helical membrane-spanning segments follow: residues 988-1008 (VFLL…KFIV), 1014-1034 (TFLA…LLEI), 1060-1080 (PAAV…SFTL), 1114-1134 (LMVP…VAAA), 1147-1167 (LLGG…FAKG), and 1177-1197 (TIVF…WVYI).

It belongs to the glycosyltransferase 2 family. Plant cellulose synthase-like D subfamily.

The protein resides in the golgi apparatus membrane. Its function is as follows. Thought to be a Golgi-localized beta-glycan synthase that polymerize the backbones of noncellulosic polysaccharides (hemicelluloses) of plant cell wall. The sequence is that of Cellulose synthase-like protein D4 (CSLD4) from Oryza sativa subsp. japonica (Rice).